Consider the following 200-residue polypeptide: Cytochrome c biogenesis ATP-binding export protein CcmA (200 aa).

Residues 2 to 200 (LDVIELDFDY…NKADYEEYHL (199 aa)) enclose the ABC transporter domain. 34-41 (GSNGAGKT) contacts ATP.

This sequence belongs to the ABC transporter superfamily. CcmA exporter (TC 3.A.1.107) family. The complex is composed of two ATP-binding proteins (CcmA) and two transmembrane proteins (CcmB).

The protein resides in the cell inner membrane. It catalyses the reaction heme b(in) + ATP + H2O = heme b(out) + ADP + phosphate + H(+). In terms of biological role, part of the ABC transporter complex CcmAB involved in the biogenesis of c-type cytochromes; once thought to export heme, this seems not to be the case, but its exact role is uncertain. Responsible for energy coupling to the transport system. The protein is Cytochrome c biogenesis ATP-binding export protein CcmA of Legionella pneumophila (strain Lens).